Reading from the N-terminus, the 237-residue chain is tRNA (guanine-N(1)-)-methyltransferase (237 aa).

Residues glycine 113 and 133-138 (VGDFIV) each bind S-adenosyl-L-methionine.

It belongs to the RNA methyltransferase TrmD family. As to quaternary structure, homodimer.

The protein resides in the cytoplasm. It carries out the reaction guanosine(37) in tRNA + S-adenosyl-L-methionine = N(1)-methylguanosine(37) in tRNA + S-adenosyl-L-homocysteine + H(+). In terms of biological role, specifically methylates guanosine-37 in various tRNAs. This chain is tRNA (guanine-N(1)-)-methyltransferase, found in Hydrogenovibrio crunogenus (strain DSM 25203 / XCL-2) (Thiomicrospira crunogena).